We begin with the raw amino-acid sequence, 362 residues long: Adenosine deaminase (362 aa).

The Zn(2+) site is built by His-19 and His-21. His-21, Asp-23, and Gly-181 together coordinate substrate. His-208 provides a ligand contact to Zn(2+). The active-site Proton donor is the Glu-211. Position 300 (Asp-300) interacts with Zn(2+).

The protein belongs to the metallo-dependent hydrolases superfamily. Adenosine and AMP deaminases family. Adenosine deaminase subfamily. Zn(2+) serves as cofactor.

It catalyses the reaction adenosine + H2O + H(+) = inosine + NH4(+). The catalysed reaction is 2'-deoxyadenosine + H2O + H(+) = 2'-deoxyinosine + NH4(+). Functionally, catalyzes the hydrolytic deamination of adenosine and 2-deoxyadenosine. In Mycolicibacterium gilvum (strain PYR-GCK) (Mycobacterium gilvum (strain PYR-GCK)), this protein is Adenosine deaminase.